The primary structure comprises 930 residues: Translation initiation factor IF-2 (930 aa).

Residues 50–67 (FKPAAAPKVEAKPAAPKV) are compositionally biased toward low complexity. Disordered regions lie at residues 50-217 (FKPA…SSEE) and 260-346 (EVVP…HELP). Basic and acidic residues-rich tracts occupy residues 68–90 (SAEK…EAKP) and 110–125 (FKAE…AERR). Positions 129-141 (KGNNRDQQQNGNR) are enriched in low complexity. Composition is skewed to basic and acidic residues over residues 157–167 (RDNRRFNDQAK) and 262–295 (VPEK…DGPR). Residues 309–318 (NQKNSNWNNN) are compositionally biased toward low complexity. Residues 337–346 (VTERKFHELP) are compositionally biased toward basic and acidic residues. The 168-residue stretch at 432–599 (ERPPVVTIMG…TVLLVAEIQE (168 aa)) folds into the tr-type G domain. Positions 441 to 448 (GHVDHGKT) are G1. GTP is bound at residue 441–448 (GHVDHGKT). The tract at residues 466-470 (GITQH) is G2. The G3 stretch occupies residues 487–490 (DTPG). Residues 487–491 (DTPGH) and 541–544 (NKID) contribute to the GTP site. The G4 stretch occupies residues 541 to 544 (NKID). Residues 577–579 (SAK) form a G5 region.

The protein belongs to the TRAFAC class translation factor GTPase superfamily. Classic translation factor GTPase family. IF-2 subfamily.

The protein resides in the cytoplasm. One of the essential components for the initiation of protein synthesis. Protects formylmethionyl-tRNA from spontaneous hydrolysis and promotes its binding to the 30S ribosomal subunits. Also involved in the hydrolysis of GTP during the formation of the 70S ribosomal complex. The sequence is that of Translation initiation factor IF-2 from Streptococcus pneumoniae (strain Taiwan19F-14).